The chain runs to 331 residues: MSTQLDASQPSNDVASPAAYDPTQKQKSQAKTARIPIKVIPAERLKKPEWIRVRAAAPGSRFYDIKRILREHNLHTVCEEASCPNIGECFGKGTATFMIMGDKCTRRCPFCDVGHGRPDPLDAQEPENLARTIAALKLSYVVITSVDRDDLRDGGAAHFVECITKIRELSPITRIEVLVPDFRGRLDRALAILNAGPPDVMNHNLETVPRLYKQARPGSDYLHSLKLLAEFKALHPDVPTKSGLMLGLGETDEEILEVMRDMRAHNVDMITIGQYLQPSEHHLPVLRYVHPDTFAMFEREAYAMGFSHAAVGAMVRSSYHADEQAHAAGVN.

A compositionally biased stretch (polar residues) spans 1–14 (MSTQLDASQPSNDV). The tract at residues 1–32 (MSTQLDASQPSNDVASPAAYDPTQKQKSQAKT) is disordered. Residues cysteine 78, cysteine 83, cysteine 89, cysteine 104, cysteine 108, cysteine 111, and serine 318 each coordinate [4Fe-4S] cluster. The 219-residue stretch at 89 to 307 (CFGKGTATFM…EREAYAMGFS (219 aa)) folds into the Radical SAM core domain.

Belongs to the radical SAM superfamily. Lipoyl synthase family. It depends on [4Fe-4S] cluster as a cofactor.

The protein resides in the cytoplasm. It catalyses the reaction [[Fe-S] cluster scaffold protein carrying a second [4Fe-4S](2+) cluster] + N(6)-octanoyl-L-lysyl-[protein] + 2 oxidized [2Fe-2S]-[ferredoxin] + 2 S-adenosyl-L-methionine + 4 H(+) = [[Fe-S] cluster scaffold protein] + N(6)-[(R)-dihydrolipoyl]-L-lysyl-[protein] + 4 Fe(3+) + 2 hydrogen sulfide + 2 5'-deoxyadenosine + 2 L-methionine + 2 reduced [2Fe-2S]-[ferredoxin]. It functions in the pathway protein modification; protein lipoylation via endogenous pathway; protein N(6)-(lipoyl)lysine from octanoyl-[acyl-carrier-protein]: step 2/2. Its function is as follows. Catalyzes the radical-mediated insertion of two sulfur atoms into the C-6 and C-8 positions of the octanoyl moiety bound to the lipoyl domains of lipoate-dependent enzymes, thereby converting the octanoylated domains into lipoylated derivatives. The polypeptide is Lipoyl synthase (Bordetella avium (strain 197N)).